The sequence spans 591 residues: V-type ATP synthase alpha chain (591 aa).

233 to 240 (GPFGAGKT) lines the ATP pocket.

Belongs to the ATPase alpha/beta chains family.

The enzyme catalyses ATP + H2O + 4 H(+)(in) = ADP + phosphate + 5 H(+)(out). In terms of biological role, produces ATP from ADP in the presence of a proton gradient across the membrane. The V-type alpha chain is a catalytic subunit. This is V-type ATP synthase alpha chain from Streptococcus pyogenes serotype M49 (strain NZ131).